Here is a 458-residue protein sequence, read N- to C-terminus: Monomethylamine methyltransferase MtmB2 (458 aa).

Pyl202 is a non-standard amino acid (pyrrolysine).

Belongs to the monomethylamine methyltransferase family. In terms of assembly, can form a complex with MtmC (MtmC1 or MtmC2).

It carries out the reaction Co(I)-[methylamine-specific corrinoid protein] + methylamine + H(+) = methyl-Co(III)-[methylamine-specific corrinoid protein] + NH4(+). It participates in one-carbon metabolism; methanogenesis from methylamine. Catalyzes the transfer of the methyl group from monomethylamine to the corrinoid cofactor of MtmC (MtmC1 or MtmC2). The polypeptide is Monomethylamine methyltransferase MtmB2 (mtmB2) (Methanosarcina barkeri).